A 640-amino-acid chain; its full sequence is 1,4-alpha-glucan branching enzyme GlgB (640 aa).

Catalysis depends on Asp-318, which acts as the Nucleophile. Catalysis depends on Glu-371, which acts as the Proton donor.

It belongs to the glycosyl hydrolase 13 family. GlgB subfamily. As to quaternary structure, monomer.

The enzyme catalyses Transfers a segment of a (1-&gt;4)-alpha-D-glucan chain to a primary hydroxy group in a similar glucan chain.. Its pathway is glycan biosynthesis; glycogen biosynthesis. Its function is as follows. Catalyzes the formation of the alpha-1,6-glucosidic linkages in glycogen by scission of a 1,4-alpha-linked oligosaccharide from growing alpha-1,4-glucan chains and the subsequent attachment of the oligosaccharide to the alpha-1,6 position. This chain is 1,4-alpha-glucan branching enzyme GlgB, found in Francisella philomiragia subsp. philomiragia (strain ATCC 25017 / CCUG 19701 / FSC 153 / O#319-036).